We begin with the raw amino-acid sequence, 385 residues long: DNA replication and repair protein RecF (385 aa).

30–37 lines the ATP pocket; that stretch reads GPNGYGKT.

The protein belongs to the RecF family.

It localises to the cytoplasm. Functionally, the RecF protein is involved in DNA metabolism; it is required for DNA replication and normal SOS inducibility. RecF binds preferentially to single-stranded, linear DNA. It also seems to bind ATP. The polypeptide is DNA replication and repair protein RecF (Mycobacterium tuberculosis (strain ATCC 25177 / H37Ra)).